Reading from the N-terminus, the 330-residue chain is DNA-binding death effector domain-containing protein 2 (330 aa).

The region spanning 25–104 (SLHRMFEVVG…RHDLLPHLAR (80 aa)) is the DED domain. A Nuclear localization signal motif is present at residues 104–109 (RKRRRP). The tract at residues 104–195 (RKRRRPVSPE…HQELGRPSSE (92 aa)) is disordered. Residues 137-147 (ASSSSDSPQSQ) are compositionally biased toward low complexity. The Bipartite nuclear localization signal signature appears at 156-174 (KRQRRSRGRPSSGARQRRR).

Interacts with CASP8, CASP10 and GTF3C3. Homodimerizes and heterodimerizes with DEDD. As to expression, expression is high in liver, heart, kidney, and testis but low in brain, spleen, lung, and skeleton muscle.

The protein resides in the nucleus. Its subcellular location is the nucleolus. Its function is as follows. May play a critical role in death receptor-induced apoptosis and may target CASP8 and CASP10 to the nucleus. May regulate degradation of intermediate filaments during apoptosis. May play a role in the general transcription machinery in the nucleus and might be an important regulator of the activity of GTF3C3. The polypeptide is DNA-binding death effector domain-containing protein 2 (Dedd2) (Mus musculus (Mouse)).